A 349-amino-acid polypeptide reads, in one-letter code: MSPLNVGIVGTGIFARDRHLPSYQEFPDKFKVIAAFNRHKAKALDFAKVADIPENKVYDNLDEILNDPHVDYIDALLPAQFNADIVEKAVKAGKPVILEKPIAANLDQAKEIVKIAESTPLPVGVAENWLYLPCIKIAKEQIEKIGPVVAFTHNSTGPFVTQNKYLTTTWRQKPEHIGGFLSDGGVHQLALVISLLGEFGSVSALTRQVRERSGADDIVFATVQLKNKEVIGSFTYGSAFGATEKSVFLKVYGKNGTVTVDLSDKKDPVVKVKLGGSAEDNGDEQIFKVDNDESFGVNAEFLNFHEAVSKKDKSLYLGTPRTAFHHLACVDAFLKSSAKNGDYVKIEQP.

Residue S2 is modified to Phosphoserine.

This is an uncharacterized protein from Saccharomyces cerevisiae (strain ATCC 204508 / S288c) (Baker's yeast).